The chain runs to 318 residues: NADH-ubiquinone oxidoreductase chain 1 (318 aa).

8 helical membrane passes run 2 to 22 (FMVNLLMLVIPVMLAMAFLTL), 71 to 91 (YIIAPTLALSIALIMWTPLPI), 98 to 118 (INLGVLFILATSSLAVYSILW), 146 to 166 (LAIILLCILLMSGSFTLSTLI), 171 to 191 (HTWLLLPSWPLAMMWFISTLA), 222 to 242 (LFFMAEYTNIIMMNALTATIF), 253 to 273 (EFFSINFTLKTLLLTTIFLWV), and 294 to 314 (LPLTLAMCMWHTALPIFLANI).

Belongs to the complex I subunit 1 family.

Its subcellular location is the mitochondrion inner membrane. It carries out the reaction a ubiquinone + NADH + 5 H(+)(in) = a ubiquinol + NAD(+) + 4 H(+)(out). Functionally, core subunit of the mitochondrial membrane respiratory chain NADH dehydrogenase (Complex I) that is believed to belong to the minimal assembly required for catalysis. Complex I functions in the transfer of electrons from NADH to the respiratory chain. The immediate electron acceptor for the enzyme is believed to be ubiquinone. In Nycticebus coucang (Slow loris), this protein is NADH-ubiquinone oxidoreductase chain 1 (MT-ND1).